We begin with the raw amino-acid sequence, 189 residues long: Interferon alpha-F (189 aa).

Residues 1–23 (MAPAWSLLLALLLLSCNAICSLG) form the signal peptide. Disulfide bonds link cysteine 24/cysteine 122 and cysteine 52/cysteine 162.

This sequence belongs to the alpha/beta interferon family.

It localises to the secreted. Functionally, produced by macrophages, IFN-alpha have antiviral activities. Interferon stimulates the production of two enzymes: a protein kinase and an oligoadenylate synthetase. The sequence is that of Interferon alpha-F (IFNAF) from Bos taurus (Bovine).